Here is a 664-residue protein sequence, read N- to C-terminus: Cyclic nucleotide-gated channel alpha-2 (664 aa).

Over residues 1 to 10 (MMTEKSNGVK) the composition is skewed to polar residues. The interval 1–51 (MMTEKSNGVKSSPANNHNHHPPPSIKANGKDDHRAGSRPQSVAADDDTSPE) is disordered. Over 1–146 (MMTEKSNGVK…PAGDWYYRWL (146 aa)) the chain is Cytoplasmic. The chain crosses the membrane as a helical span at residues 147–168 (FVIAMPVLYNWCLLVARACFSD). Over 169-178 (LQRNYFVVWL) the chain is Extracellular. A helical membrane pass occupies residues 179–199 (VLDYFSDTVYIADLIIRLRTG). Over 200–224 (FLEQGLLVKDPKKLRDNYIHTLQFK) the chain is Cytoplasmic. Residues 225 to 243 (LDVASIIPTDLIYFAVGIH) form a helical membrane-spanning segment. Residues 244–248 (SPEVR) are Extracellular-facing. Residues 249–267 (FNRLLHFARMFEFFDRTET) form a helical membrane-spanning segment. Residues 268-274 (RTSYPNI) lie on the Cytoplasmic side of the membrane. Positions 272-380 (PNIFRISNLV…GNVGSMISNM (109 aa)) are ion conduction pathway. A helical membrane pass occupies residues 275-298 (FRISNLVLYILVIIHWNACIYYVI). The Extracellular portion of the chain corresponds to 299 to 321 (SKSIGFGVDTWVYPNITDPEYGY). The next 2 helical transmembrane spans lie at 322-356 (LARE…LFVI) and 357-381 (FDFL…SNMN). Positions 339–342 (TIGE) are selectivity filter. The segment at 382–458 (ATRAEFQAKI…STLKKVRIFQ (77 aa)) is C-linker. Over 382–664 (ATRAEFQAKI…INTPEPTAAE (283 aa)) the chain is Cytoplasmic. The cyclic nucleotide-binding domain stretch occupies residues 462–582 (AGLLVELVLK…EERGREILMK (121 aa)). 3',5'-cyclic GMP is bound by residues Gly522, Ser525, Arg538, and Thr539. 3',5'-cyclic AMP contacts are provided by Arg538 and Thr539. Residues 599–653 (VQEKLEQLETNMDTLYTRFARLLAEYTGAQQKLKQRITVLETKMKQNHEDDYLSD) adopt a coiled-coil conformation.

It belongs to the cyclic nucleotide-gated cation channel (TC 1.A.1.5) family. CNGA2 subfamily. In terms of assembly, the olfactory cyclic nucleotide-gated channel is an heterotetramer composed of CNGA2, CNGA4 and CNGB1b subunits with 2:1:1 stoichiometry. As to expression, olfactory neurons. Widely expressed in brain, enriched in deep cerebellar nuclei, olfactory bulb mitral cells and cerebellar Purkinje neurons. Expressed in olfactory sensory cilia (at protein level).

It is found in the cell projection. The protein resides in the cilium membrane. It catalyses the reaction Ca(2+)(in) = Ca(2+)(out). The catalysed reaction is Na(+)(in) = Na(+)(out). The enzyme catalyses K(+)(in) = K(+)(out). It carries out the reaction NH4(+)(in) = NH4(+)(out). It catalyses the reaction Rb(+)(in) = Rb(+)(out). The catalysed reaction is Li(+)(in) = Li(+)(out). The enzyme catalyses Cs(+)(in) = Cs(+)(out). The channel activity is inhibited by L-cis diltiazem. Functionally, pore-forming subunit of the olfactory cyclic nucleotide-gated channel. Operates in the cilia of olfactory sensory neurons where chemical stimulation of the odorant is converted to an electrical signal. Mediates odorant-induced cAMP-dependent Ca(2+) influx triggering neuron depolarization. The rise of intracellular Ca(2+) levels potentiates the olfactory response by activating Ca(2+)-dependent Cl(-) channels, but it also serves as a negative feedback signal to desensitize the channel for rapid adaptation to odorants. Conducts cAMP- and cGMP-gated ion currents, with permeability for monovalent and divalent cations. The polypeptide is Cyclic nucleotide-gated channel alpha-2 (Rattus norvegicus (Rat)).